The primary structure comprises 675 residues: Metal-nicotianamine transporter YSL3 (675 aa).

Helical transmembrane passes span 42–62, 66–86, 114–134, 159–179, 219–239, 280–300, 325–345, 386–406, 408–428, 450–470, 504–524, 556–576, 602–622, and 630–650; these read ITFRGIVASLIIGIIYSVIVM, LTTGLVPNLNVSAALLAFVFL, CAVACYSIAVGGGFGSYLLGL, GIGWMTAFLFFTCFVGLLALV, VFGFVKYFSFSFIWAFFQWFF, IVNISLLFGAVLSWGIMWPLI, VFISISLILGDGLYQFIKILF, IPLWVAAVGYAAFSVVSIIAI, IMFPELKWYFIVVAYMLAPSL, VALFILAAMAGKQNGVVAGLV, VSQAIGTAIGCVVAPLTFFLF, FSALPQHCLQLCYGFFAFAVA, FLVGGYFAIDMCVGSLIVFAW, and AGLMVPAVASGLICGDGLWIL.

The protein belongs to the YSL (TC 2.A.67.2) family. In terms of tissue distribution, expressed in leaves, anthers and pollen grains. Restricted to the vasculature.

Its subcellular location is the membrane. Functionally, may be involved in the lateral transport of nicotianamine-chelated metals in the vasculature. The chain is Metal-nicotianamine transporter YSL3 (YSL3) from Arabidopsis thaliana (Mouse-ear cress).